The chain runs to 183 residues: Peptide deformylase (183 aa).

The Fe cation site is built by C111 and H154. Residue E155 is part of the active site. H158 is a binding site for Fe cation.

Belongs to the polypeptide deformylase family. Requires Fe(2+) as cofactor.

It carries out the reaction N-terminal N-formyl-L-methionyl-[peptide] + H2O = N-terminal L-methionyl-[peptide] + formate. Its function is as follows. Removes the formyl group from the N-terminal Met of newly synthesized proteins. Requires at least a dipeptide for an efficient rate of reaction. N-terminal L-methionine is a prerequisite for activity but the enzyme has broad specificity at other positions. In Staphylococcus epidermidis (strain ATCC 35984 / DSM 28319 / BCRC 17069 / CCUG 31568 / BM 3577 / RP62A), this protein is Peptide deformylase.